Reading from the N-terminus, the 264-residue chain is Acyl-[acyl-carrier-protein]--UDP-N-acetylglucosamine O-acyltransferase (264 aa).

This sequence belongs to the transferase hexapeptide repeat family. LpxA subfamily. In terms of assembly, homotrimer.

The protein localises to the cytoplasm. The enzyme catalyses a (3R)-hydroxyacyl-[ACP] + UDP-N-acetyl-alpha-D-glucosamine = a UDP-3-O-[(3R)-3-hydroxyacyl]-N-acetyl-alpha-D-glucosamine + holo-[ACP]. It functions in the pathway glycolipid biosynthesis; lipid IV(A) biosynthesis; lipid IV(A) from (3R)-3-hydroxytetradecanoyl-[acyl-carrier-protein] and UDP-N-acetyl-alpha-D-glucosamine: step 1/6. Involved in the biosynthesis of lipid A, a phosphorylated glycolipid that anchors the lipopolysaccharide to the outer membrane of the cell. This chain is Acyl-[acyl-carrier-protein]--UDP-N-acetylglucosamine O-acyltransferase, found in Chlorobaculum parvum (strain DSM 263 / NCIMB 8327) (Chlorobium vibrioforme subsp. thiosulfatophilum).